The chain runs to 139 residues: VLTLEKPSKFAPIKLPKADGSDIFPRVWSKVMGWGVTSYPNGKPSNELQSVDVRVWGDNACENKLGVDKSSLCAGGEAGKDSCVGDTGDPLIKENGRGDADDILLGLSGWGTGCGDKDMPSVYSRVSAGIEWINSVIKK.

The Peptidase S1 domain maps to 1 to 138 (VLTLEKPSKF…GIEWINSVIK (138 aa)). Cystine bridges form between cysteine 61-cysteine 73 and cysteine 83-cysteine 114.

Belongs to the peptidase S1 family.

The protein localises to the secreted. Its function is as follows. Secreted effector that suppresses host plant glucan elicitor-mediated defense responses. Targets host endoglucanases and inhibits the endoglucanase-mediated release of elicitor-active glucan oligosaccharides from P.sojae cell walls. This chain is Glucanase inhibitor protein 3, found in Phytophthora sojae (Soybean stem and root rot agent).